The following is a 66-amino-acid chain: Large ribosomal subunit protein uL29 (66 aa).

It belongs to the universal ribosomal protein uL29 family.

This chain is Large ribosomal subunit protein uL29, found in Fervidobacterium nodosum (strain ATCC 35602 / DSM 5306 / Rt17-B1).